Consider the following 262-residue polypeptide: Putative ankyrin repeat protein R848 (262 aa).

ANK repeat units follow at residues 8 to 37 (SNDY…NVTH), 38 to 67 (DNNY…DIRD), 68 to 97 (CRDY…NIRA), 99 to 127 (DDYA…NFRA), 128 to 157 (DNDY…DIRA), 159 to 187 (DDYA…DFRS), and 189 to 217 (NNAS…DVNT).

The polypeptide is Putative ankyrin repeat protein R848 (Acanthamoeba polyphaga (Amoeba)).